A 67-amino-acid polypeptide reads, in one-letter code: Beta-defensin 103A (67 aa).

Positions M1–G22 are cleaved as a signal peptide. 3 disulfide bridges follow: C33/C62, C40/C55, and C45/C63.

The protein belongs to the beta-defensin family.

The protein resides in the secreted. Functionally, exhibits antimicrobial activity against Gram-positive and Gram-negative bacteria. The polypeptide is Beta-defensin 103A (DEFB103A) (Pan troglodytes (Chimpanzee)).